Here is a 544-residue protein sequence, read N- to C-terminus: Ell-associated factor Eaf (544 aa).

The segment at 147 to 544 (QSVPMNMGHQ…LSSNSSDDDD (398 aa)) is disordered. Residues 193–202 (SSKDKVDFKP) are compositionally biased toward basic and acidic residues. A Phosphoserine modification is found at Ser205. Residues 264-273 (SGSSTGSSSG) show a composition bias toward low complexity. The segment covering 287-299 (GKQRQAHGKRQQI) has biased composition (basic residues). Composition is skewed to low complexity over residues 305–319 (PPVQ…QQQP), 333–374 (QPHP…QQRP), and 396–407 (ASQSVAQAAAVL). A compositionally biased stretch (acidic residues) spans 425 to 440 (DSSDSDSGSDSDDSTE). Low complexity-rich tracts occupy residues 450 to 483 (EQQQ…HMNQ), 503 to 513 (QQPQPQPQQQQ), and 526 to 544 (NDLL…DDDD).

Belongs to the EAF family.

The protein localises to the nucleus. In terms of biological role, promotes transcriptional elongation by Su(Tpl)/ELL. Essential for development. The chain is Ell-associated factor Eaf from Drosophila persimilis (Fruit fly).